Here is a 340-residue protein sequence, read N- to C-terminus: Pre-mRNA-splicing factor cwf17 (340 aa).

WD repeat units follow at residues G48–G87, G91–K130, G133–T173, E175–V214, G217–R256, G267–L306, and G308–L339.

Belongs to the 40S cdc5-associated complex (or cwf complex), a spliceosome sub-complex reminiscent of a late-stage spliceosome composed of the U2, U5 and U6 snRNAs and at least brr2, cdc5, cwf2/prp3, cwf3/syf1, cwf4/syf3, cwf5/ecm2, spp42/cwf6, cwf7/spf27, cwf8, cwf9, cwf10, cwf11, cwf12, prp45/cwf13, cwf14, cwf15, cwf16, cwf17, cwf18, cwf19, cwf20, cwf21, cwf22, cwf23, cwf24, cwf25, cwf26, cyp7/cwf27, cwf28, cwf29/ist3, lea1, msl1, prp5/cwf1, prp10, prp12/sap130, prp17, prp22, sap61, sap62, sap114, sap145, slu7, smb1, smd1, smd3, smf1, smg1 and syf2.

The protein localises to the nucleus. Its function is as follows. Involved in mRNA splicing where it associates with cdc5 and the other cwf proteins as part of the spliceosome. In Schizosaccharomyces pombe (strain 972 / ATCC 24843) (Fission yeast), this protein is Pre-mRNA-splicing factor cwf17 (cwf17).